We begin with the raw amino-acid sequence, 547 residues long: Heme-binding protein A (547 aa).

The first 18 residues, 1–18 (MKLKATLTLAAATLVLAA), serve as a signal peptide directing secretion. Cys19 carries N-palmitoyl cysteine lipidation. Residue Cys19 is the site of S-diacylglycerol cysteine attachment.

It belongs to the bacterial solute-binding protein 5 family.

The protein resides in the cell inner membrane. Its function is as follows. Important role in heme acquisition or metabolism. This Haemophilus influenzae (strain ATCC 51907 / DSM 11121 / KW20 / Rd) protein is Heme-binding protein A (hbpA).